Consider the following 1088-residue polypeptide: RNA-directed RNA polymerase (1088 aa).

Residues 501 to 687 (LSYGDVTRFL…AKRYIAGGKI (187 aa)) enclose the RdRp catalytic domain.

Belongs to the reoviridae RNA-directed RNA polymerase family. As to quaternary structure, interacts with VP3 (Potential). Interacts with VP2; this interaction activates VP1. Interacts with NSP5; this interaction is probably necessary for the formation of functional virus factories. Interacts with NSP2; this interaction is weak. Requires Mg(2+) as cofactor.

The protein resides in the virion. The catalysed reaction is RNA(n) + a ribonucleoside 5'-triphosphate = RNA(n+1) + diphosphate. Functionally, RNA-directed RNA polymerase that is involved in both transcription and genome replication. Together with VP3 capping enzyme, forms an enzyme complex positioned near the channels situated at each of the five-fold vertices of the core. Following infection, the outermost layer of the virus is lost, leaving a double-layered particle (DLP) made up of the core and VP6 shell. VP1 then catalyzes the transcription of fully conservative plus-strand genomic RNAs that are extruded through the DLP's channels into the cytoplasm where they function as mRNAs for translation of viral proteins. One copy of each of the viral (+)RNAs is also recruited during core assembly, together with newly synthesized polymerase complexes and VP2. The polymerase of these novo-formed particles catalyzes the synthesis of complementary minus-strands leading to dsRNA formation. To do so, the polymerase specifically recognizes and binds 4 bases 5'-UGUG-3' in the conserved 3'-sequence of plus-strand RNA templates. VP2 presumably activates the autoinhibited VP1-RNA complex to coordinate packaging and genome replication. Once dsRNA synthesis is complete, the polymerase switches to the transcriptional mode, thus providing secondary transcription. This is RNA-directed RNA polymerase from Rotavirus A (strain RVA/SA11-Patton/G3P[X]) (RV-A).